Consider the following 251-residue polypeptide: Segregation and condensation protein A (251 aa).

The protein belongs to the ScpA family. As to quaternary structure, component of a cohesin-like complex composed of ScpA, ScpB and the Smc homodimer, in which ScpA and ScpB bind to the head domain of Smc. The presence of the three proteins is required for the association of the complex with DNA.

Its subcellular location is the cytoplasm. Its function is as follows. Participates in chromosomal partition during cell division. May act via the formation of a condensin-like complex containing Smc and ScpB that pull DNA away from mid-cell into both cell halves. This Bacillus velezensis (strain DSM 23117 / BGSC 10A6 / LMG 26770 / FZB42) (Bacillus amyloliquefaciens subsp. plantarum) protein is Segregation and condensation protein A.